Reading from the N-terminus, the 459-residue chain is Glutathione reductase (459 aa).

The FAD site is built by serine 14, glycine 15, glutamate 34, threonine 41, cysteine 42, lysine 50, and alanine 114. Glutathione is bound at residue serine 14. A disulfide bond links cysteine 42 and cysteine 47. NADP(+)-binding residues include isoleucine 177, glutamate 180, arginine 197, lysine 203, and glycine 262. Residues aspartate 313 and threonine 321 each coordinate FAD. Position 329 (arginine 329) interacts with glutathione. Alanine 351 is a binding site for NADP(+). Histidine 448 contributes to the FAD binding site. The active-site Proton acceptor is the histidine 448.

Belongs to the class-I pyridine nucleotide-disulfide oxidoreductase family. As to quaternary structure, homodimer. It depends on FAD as a cofactor.

Its subcellular location is the cytoplasm. The enzyme catalyses 2 glutathione + NADP(+) = glutathione disulfide + NADPH + H(+). Its function is as follows. Catalyzes the reduction of glutathione disulfide (GSSG) to reduced glutathione (GSH). Constitutes the major mechanism to maintain a high GSH:GSSG ratio in the cytosol. The polypeptide is Glutathione reductase (gor) (Nostoc sp. (strain PCC 7120 / SAG 25.82 / UTEX 2576)).